Here is a 286-residue protein sequence, read N- to C-terminus: Aspartate-semialdehyde dehydrogenase (286 aa).

NADP(+) is bound by residues 10 to 13 (RGMV), 37 to 38 (TS), and Q74. R103 contacts phosphate. Catalysis depends on C136, which acts as the Acyl-thioester intermediate. Residue Q163 participates in substrate binding. NADP(+)-binding positions include 166 to 167 (SG) and P194. Residue E242 coordinates substrate. Position 245 (K245) interacts with phosphate. R269 is a substrate binding site. Residue H276 is the Proton acceptor of the active site.

Belongs to the aspartate-semialdehyde dehydrogenase family. In terms of assembly, homodimer.

The catalysed reaction is L-aspartate 4-semialdehyde + phosphate + NADP(+) = 4-phospho-L-aspartate + NADPH + H(+). It functions in the pathway amino-acid biosynthesis; L-lysine biosynthesis via DAP pathway; (S)-tetrahydrodipicolinate from L-aspartate: step 2/4. Its pathway is amino-acid biosynthesis; L-methionine biosynthesis via de novo pathway; L-homoserine from L-aspartate: step 2/3. It participates in amino-acid biosynthesis; L-threonine biosynthesis; L-threonine from L-aspartate: step 2/5. Catalyzes the NADPH-dependent formation of L-aspartate-semialdehyde (L-ASA) by the reductive dephosphorylation of L-aspartyl-4-phosphate. The sequence is that of Aspartate-semialdehyde dehydrogenase (asd) from Actinobacillus pleuropneumoniae (Haemophilus pleuropneumoniae).